Here is a 142-residue protein sequence, read N- to C-terminus: Probable histone H2AXb (142 aa).

Positions 1 to 12 (MSSGAGSGTTKG) are enriched in gly residues. The segment at 1–28 (MSSGAGSGTTKGGRGKPKATKSVSRSSK) is disordered. Ser139 carries the phosphoserine; by ATM and ATR modification. Residues 139–140 (SQ) carry the [ST]-Q motif motif.

The protein belongs to the histone H2A family. In terms of assembly, the nucleosome is a histone octamer containing two molecules each of H2A, H2B, H3 and H4 assembled in one H3-H4 heterotetramer and two H2A-H2B heterodimers. The octamer wraps approximately 147 bp of DNA. Interacts with numerous proteins required for DNA damage signaling and repair when phosphorylated on Ser-139. Post-translationally, phosphorylated to form H2AXS139ph (gamma-H2AX) in response to DNA double strand breaks (DSBs) generated by exogenous genotoxic agents and by stalled replication forks, and may also occur during meiotic recombination events. Phosphorylation can extend up to several thousand nucleosomes from the actual site of the DSB and may mark the surrounding chromatin for recruitment of proteins required for DNA damage signaling and repair. Widespread phosphorylation may also serve to amplify the damage signal or aid repair of persistent lesions. H2AXS139ph in response to ionizing radiation is mediated by ATM while defects in DNA replication induce H2AXS139ph subsequent to activation of ATR. Dephosphorylation of H2AXS139ph by PP2A is required for DNA DSB repair. Expressed in meristems and dividing cells.

The protein resides in the nucleus. It localises to the chromosome. Variant histone H2A which replaces conventional H2A in a subset of nucleosomes. Nucleosomes wrap and compact DNA into chromatin, limiting DNA accessibility to the cellular machineries which require DNA as a template. Histones thereby play a central role in transcription regulation, DNA repair, DNA replication and chromosomal stability. DNA accessibility is regulated via a complex set of post-translational modifications of histones, also called histone code, and nucleosome remodeling. Required for checkpoint-mediated arrest of cell cycle progression in response to low doses of ionizing radiation and for efficient repair of DNA double strand breaks (DSBs) specifically when modified by C-terminal phosphorylation. This is Probable histone H2AXb from Arabidopsis thaliana (Mouse-ear cress).